Here is a 359-residue protein sequence, read N- to C-terminus: Aminomethyltransferase (359 aa).

Belongs to the GcvT family. In terms of assembly, the glycine cleavage system is composed of four proteins: P, T, L and H.

The enzyme catalyses N(6)-[(R)-S(8)-aminomethyldihydrolipoyl]-L-lysyl-[protein] + (6S)-5,6,7,8-tetrahydrofolate = N(6)-[(R)-dihydrolipoyl]-L-lysyl-[protein] + (6R)-5,10-methylene-5,6,7,8-tetrahydrofolate + NH4(+). Functionally, the glycine cleavage system catalyzes the degradation of glycine. The sequence is that of Aminomethyltransferase from Alcanivorax borkumensis (strain ATCC 700651 / DSM 11573 / NCIMB 13689 / SK2).